A 126-amino-acid polypeptide reads, in one-letter code: Ejaculatory bulb-specific protein 3 (126 aa).

A signal peptide spans 1–17 (MKMILALVVLGLVLVAA).

This sequence belongs to the insect A10/OS-D protein family. In terms of tissue distribution, specifically expressed in the ejaculatory bulb and seminal fluid.

Its subcellular location is the secreted. Protein component of the posterior mating plug. In Drosophila melanogaster (Fruit fly), this protein is Ejaculatory bulb-specific protein 3.